A 253-amino-acid polypeptide reads, in one-letter code: Tetraspanin-11 (253 aa).

3 consecutive transmembrane segments (helical) span residues 19–39 (LLFIFNFFFWVGGAAVMAVGI), 63–83 (ILIFVGGLVMTTGFLGFGAII), and 93–113 (YFCLLLVIFLVELVAGVLAHV). N-linked (GlcNAc...) asparagine glycosylation occurs at Asn-127. A helical transmembrane segment spans residues 220–240 (LLLMGAVGIGVACLQICGMVL).

This sequence belongs to the tetraspanin (TM4SF) family.

It is found in the membrane. In Mus musculus (Mouse), this protein is Tetraspanin-11 (Tspan11).